The primary structure comprises 314 residues: uncharacterized protein (314 aa).

The disordered stretch occupies residues 1 to 71 (MAGNSQRRGA…QRAGRKADET (71 aa)). S-adenosyl-L-methionine is bound by residues glycine 266, isoleucine 286, and leucine 295.

The protein belongs to the class IV-like SAM-binding methyltransferase superfamily. RNA methyltransferase TrmH family.

This is an uncharacterized protein from Mycolicibacterium smegmatis (strain ATCC 700084 / mc(2)155) (Mycobacterium smegmatis).